The following is a 314-amino-acid chain: Prohormone-3 (314 aa).

The signal sequence occupies residues 1–19; that stretch reads MGRVLLSASSLLLHIQVFT. The chain crosses the membrane as a helical span at residues 90–112; it reads YTCVALTVVALVSTMHFGVEAWG.

It localises to the membrane. The protein is Prohormone-3 of Apis mellifera (Honeybee).